Here is a 98-residue protein sequence, read N- to C-terminus: NADH-ubiquinone oxidoreductase chain 4L (98 aa).

The next 3 helical transmembrane spans lie at 1–21 (MAPI…GVLI), 28–48 (STLL…TLLI), and 59–79 (APLI…ALLV).

It belongs to the complex I subunit 4L family. Core subunit of respiratory chain NADH dehydrogenase (Complex I) which is composed of 45 different subunits.

The protein localises to the mitochondrion inner membrane. It catalyses the reaction a ubiquinone + NADH + 5 H(+)(in) = a ubiquinol + NAD(+) + 4 H(+)(out). In terms of biological role, core subunit of the mitochondrial membrane respiratory chain NADH dehydrogenase (Complex I) which catalyzes electron transfer from NADH through the respiratory chain, using ubiquinone as an electron acceptor. Part of the enzyme membrane arm which is embedded in the lipid bilayer and involved in proton translocation. This Perameles gunnii (Eastern barred bandicoot) protein is NADH-ubiquinone oxidoreductase chain 4L (MT-ND4L).